Here is a 335-residue protein sequence, read N- to C-terminus: Arylacetonitrilase (335 aa).

Residues 6 to 291 (LKVAITQAQP…EGIVYADLDM (286 aa)) form the CN hydrolase domain. E46 serves as the catalytic Proton acceptor. K127 is an active-site residue. C168 (nucleophile) is an active-site residue.

Belongs to the carbon-nitrogen hydrolase superfamily. Nitrilase family.

It carries out the reaction a nitrile + 2 H2O = a carboxylate + NH4(+). The catalysed reaction is 4-chlorophenylacetonitrile + 2 H2O = 4-chlorophenylacetate + NH4(+). Its function is as follows. Nitrilase that hydrolyzes preferentially phenylacetonitrile, (R,S)-mandelonitrile, and 3-indolylacetonitrile. This is Arylacetonitrilase from Arthroderma benhamiae (strain ATCC MYA-4681 / CBS 112371) (Trichophyton mentagrophytes).